Consider the following 189-residue polypeptide: Ras-like protein 1 (189 aa).

G10–S17 lines the GTP pocket. Positions Y32–Y40 match the Effector region motif. GTP contacts are provided by residues D57–Q61 and N116–D119. C186 carries the cysteine methyl ester modification. C186 carries S-geranylgeranyl cysteine lipidation. A propeptide spans K187–L189 (removed in mature form).

This sequence belongs to the small GTPase superfamily. Ras family.

It is found in the cell membrane. The enzyme catalyses GTP + H2O = GDP + phosphate + H(+). Alternates between an inactive form bound to GDP and an active form bound to GTP. Activated by a guanine nucleotide-exchange factor (GEF) and inactivated by a GTPase-activating protein (GAP). Ras proteins bind GDP/GTP and possess intrinsic GTPase activity. Plays a role in eye development by regulating cell growth, survival of postmitotic ommatidial cells and differentiation of photoreceptor cells. During larval development, mediates Ptth/tor signaling leading to the production of ecdysone, a hormone required for the initiation of metamorphosis. This chain is Ras-like protein 1, found in Drosophila grimshawi (Hawaiian fruit fly).